A 151-amino-acid chain; its full sequence is Ribosomal RNA large subunit methyltransferase H (151 aa).

Residues Leu-73, Gly-100, and 119–124 (LTKLTL) contribute to the S-adenosyl-L-methionine site.

It belongs to the RNA methyltransferase RlmH family. As to quaternary structure, homodimer.

It localises to the cytoplasm. It catalyses the reaction pseudouridine(1915) in 23S rRNA + S-adenosyl-L-methionine = N(3)-methylpseudouridine(1915) in 23S rRNA + S-adenosyl-L-homocysteine + H(+). Functionally, specifically methylates the pseudouridine at position 1915 (m3Psi1915) in 23S rRNA. The chain is Ribosomal RNA large subunit methyltransferase H from Campylobacter hominis (strain ATCC BAA-381 / DSM 21671 / CCUG 45161 / LMG 19568 / NCTC 13146 / CH001A).